A 556-amino-acid polypeptide reads, in one-letter code: Insulin-like growth factor 2 mRNA-binding protein 2 (556 aa).

RRM domains are found at residues 3-76 (NKLY…YSVS) and 82-157 (RKIQ…YIPD). Position 11 is a phosphoserine (serine 11). Residues 156-188 (PDEEVSSPSPPQRAQRGDHSSREQGHAPGGTSQ) are disordered. Phosphoserine is present on residues serine 162 and serine 164. The span at 170–180 (QRGDHSSREQG) shows a compositional bias: basic and acidic residues. KH domains lie at 193 to 258 (DFPL…CRMI), 274 to 341 (EIPL…EIEI), 384 to 449 (QEIV…QGRI), and 466 to 532 (KLEA…QRKI). Threonine 507 is modified (phosphothreonine).

It belongs to the RRM IMP/VICKZ family. In terms of assembly, can form homooligomers and heterooligomers with IGF2BP1 and IGF2BP3 in an RNA-dependent manner. Interacts with HNRPD. Interacts with IGF2BP1. Interacts with ELAVL1, DHX9, HNRNPU, MATR3 and PABPC1.

The protein localises to the nucleus. It localises to the cytoplasm. It is found in the P-body. The protein resides in the stress granule. RNA-binding factor that recruits target transcripts to cytoplasmic protein-RNA complexes (mRNPs). This transcript 'caging' into mRNPs allows mRNA transport and transient storage. It also modulates the rate and location at which target transcripts encounter the translational apparatus and shields them from endonuclease attacks or microRNA-mediated degradation. Preferentially binds to N6-methyladenosine (m6A)-containing mRNAs and increases their stability. Binds to the 5'-UTR of the insulin-like growth factor 2 (IGF2) mRNAs. Binding is isoform-specific. Binds to beta-actin/ACTB and MYC transcripts. Increases MYC mRNA stability by binding to the coding region instability determinant (CRD) and binding is enhanced by m6A-modification of the CRD. The polypeptide is Insulin-like growth factor 2 mRNA-binding protein 2 (IGF2BP2) (Pongo abelii (Sumatran orangutan)).